A 1514-amino-acid polypeptide reads, in one-letter code: Neurexin-1 (1514 aa).

The signal sequence occupies residues 1-30; sequence MGTALVQRGGCCLLCLSLLLLGCWAELGSG. Residues 31 to 217 form the Laminin G-like 1 domain; that stretch reads LEFPGAEGQW…PPNSGGGSPC (187 aa). Residues 31 to 1438 are Extracellular-facing; that stretch reads LEFPGAEGQW…EVIRESSSTT (1408 aa). Residues Asn-125 and Asn-190 are each glycosylated (N-linked (GlcNAc...) asparagine). The tract at residues 197-221 is disordered; sequence VDGGEVKLDDEPPNSGGGSPCEAGE. Residues 219–256 enclose the EGF-like 1 domain; the sequence is AGEEGEGGVCLNGGVCSVVDDQAVCDCSRTGFRGKDCS. 2 disulfide bridges follow: Cys-228-Cys-243 and Cys-245-Cys-255. Laminin G-like domains follow at residues 283–480 and 487–679; these read IATF…AFKC and DPIT…KPSC. Ca(2+) contacts are provided by Asp-329, Leu-346, and Met-414. 5 disulfide bridges follow: Cys-444/Cys-480, Cys-650/Cys-679, Cys-687/Cys-698, Cys-692/Cys-707, and Cys-709/Cys-719. An EGF-like 2 domain is found at 683 to 720; sequence TAKPCLSNPCKNNGMCRDGWNRYVCDCSGTGYLGRSCE. 2 Laminin G-like domains span residues 725-898 and 912-1087; these read VLSY…IDYC and DPVT…ERGC. Residues Asp-772 and Leu-789 each contribute to the Ca(2+) site. Asn-797 carries N-linked (GlcNAc...) asparagine glycosylation. Residue Arg-848 coordinates Ca(2+). Disulfide bonds link Cys-890-Cys-898, Cys-1059-Cys-1087, Cys-1094-Cys-1105, Cys-1099-Cys-1114, and Cys-1116-Cys-1126. Residues 1090–1127 form the EGF-like 3 domain; sequence PSTTCQEDSCSNQGVCLQQWDGFSCDCSMTSFSGPLCN. One can recognise a Laminin G-like 6 domain in the interval 1133 to 1331; sequence YIFSKGGGQI…DANIAIVGNV (199 aa). Ca(2+) contacts are provided by Asp-1183 and Val-1200. Asn-1230 carries an N-linked (GlcNAc...) asparagine glycan. 2 residues coordinate Ca(2+): Ile-1282 and Asn-1284. O-linked (Xyl...) (heparan sulfate) serine glycosylation occurs at Ser-1392. The tract at residues 1396–1427 is disordered; the sequence is PSDDEDIDPCEPSSGGLANPTRVGGREPYPGS. The chain crosses the membrane as a helical span at residues 1439-1459; the sequence is GMVVGIVAAAALCILILLYAM. Residues 1460–1514 are Cytoplasmic-facing; it reads YKYRNRDEGSYHVDESRNYISNSAQSNGAVVKEKQPSSAKSANKNKKNKDKEYYV. The interval 1481-1507 is interaction with CASK; the sequence is NSAQSNGAVVKEKQPSSAKSANKNKKN. The interval 1481-1514 is disordered; it reads NSAQSNGAVVKEKQPSSAKSANKNKKNKDKEYYV.

This sequence belongs to the neurexin family. As to quaternary structure, interacts (via laminin G-like domain 2 and/or laminin G-like domain 6) with NLGN1 forming a heterotetramer, where one NLGN1 dimer interacts with one NRXN1 dimer. Also interacts (via laminin G-like domain 2 and/or laminin G-like domain 6) with NLGN2, NLGN3 and NLGN4L; interactions with NLGN1, NLGN2, NLGN3 and NLGN4L are calcium-dependent. Interacts (via cytoplasmic C-terminal region) with CASK (via the PDZ, SH3 and guanylate kinase-like domains). Interacts (via cytoplasmic C-terminus) with CASKIN1 and APBA1. Interacts (via laminin G-like domain 2) with NXPH1 and NXPH3. Alpha-type isoforms (neurexin-1-alpha) interact (via laminin G-like domain 2 and/or laminin G-like domain 6) with DAG1 (via alpha-dystroglycan chain). Interacts with LRRTM1, LRRTM2, LRRTM3 and LRRTM4. Interacts with SYT13 and SYTL1. Interacts with CBLN1, CBLN2 and, less avidly, with CBLN4. Interacts with CLSTN3. In terms of processing, O-glycosylated; contains heparan sulfate. Heparan sulfate attachment is required for synapse development by mediating interactions with neuroligins and LRRTM2.

The protein resides in the presynaptic cell membrane. In terms of biological role, cell surface protein involved in cell-cell-interactions, exocytosis of secretory granules and regulation of signal transmission. Function is isoform-specific. Alpha-type isoforms have a long N-terminus with six laminin G-like domains and play an important role in synaptic signal transmission. Alpha-type isoforms play a role in the regulation of calcium channel activity and Ca(2+)-triggered neurotransmitter release at synapses and at neuromuscular junctions. They play an important role in Ca(2+)-triggered exocytosis of secretory granules in pituitary gland. They may affect their functions at synapses and in endocrine cells via their interactions with proteins from the exocytotic machinery. Likewise, alpha-type isoforms play a role in regulating the activity of postsynaptic NMDA receptors, a subtype of glutamate-gated ion channels. Both alpha-type and beta-type isoforms may play a role in the formation or maintenance of synaptic junctions via their interactions (via the extracellular domains) with neuroligin family members, CBLN1 or CBLN2. In vitro, triggers the de novo formation of presynaptic structures. May be involved in specification of excitatory synapses. Alpha-type isoforms were first identified as receptors for alpha-latrotoxin from spider venom. This chain is Neurexin-1 (Nrxn1), found in Mus musculus (Mouse).